A 396-amino-acid polypeptide reads, in one-letter code: Phosphoglycerate kinase (396 aa).

Substrate is bound by residues 21–23 (DFN), arginine 36, 59–62 (HLGK), arginine 119, and arginine 156. ATP is bound by residues lysine 206, glutamate 325, and 352 to 355 (GGDS).

This sequence belongs to the phosphoglycerate kinase family. Monomer.

The protein localises to the cytoplasm. The catalysed reaction is (2R)-3-phosphoglycerate + ATP = (2R)-3-phospho-glyceroyl phosphate + ADP. It functions in the pathway carbohydrate degradation; glycolysis; pyruvate from D-glyceraldehyde 3-phosphate: step 2/5. This Staphylococcus saprophyticus subsp. saprophyticus (strain ATCC 15305 / DSM 20229 / NCIMB 8711 / NCTC 7292 / S-41) protein is Phosphoglycerate kinase.